The primary structure comprises 421 residues: Ankyrin repeat and SOCS box protein 6 (421 aa).

6 ANK repeats span residues 67–97 (EGVS…NLNF), 102–131 (TYYT…DINR), 136–166 (HESS…DVNA), 170–205 (HGKT…DVKA), 226–255 (GGDK…DPSE), and 260–289 (ESLT…AYNC). One can recognise an SOCS box domain in the interval 360 to 415 (ALHFSLRQLESYPPPLKHLCRVAIRLYLQPWPVDVKVKALPLPDRLKWYLLSEHSG).

This sequence belongs to the ankyrin SOCS box (ASB) family. As to quaternary structure, binds APS. Identified in a complex with ELOB and ELOC. Interacts with CUL5 and RNF7. Interacts with SQSTM1.

The protein localises to the cytoplasm. It functions in the pathway protein modification; protein ubiquitination. Probable substrate-recognition component of a SCF-like ECS (Elongin-Cullin-SOCS-box protein) E3 ubiquitin-protein ligase complex which mediates the ubiquitination and subsequent proteasomal degradation of target proteins. May play a role in the regulation of cell proliferation and autophagy by promoting the ubiquitination and degradation of SQSTM1. The polypeptide is Ankyrin repeat and SOCS box protein 6 (ASB6) (Pongo abelii (Sumatran orangutan)).